We begin with the raw amino-acid sequence, 421 residues long: Gamma-glutamyl phosphate reductase (421 aa).

This sequence belongs to the gamma-glutamyl phosphate reductase family.

Its subcellular location is the cytoplasm. It catalyses the reaction L-glutamate 5-semialdehyde + phosphate + NADP(+) = L-glutamyl 5-phosphate + NADPH + H(+). The protein operates within amino-acid biosynthesis; L-proline biosynthesis; L-glutamate 5-semialdehyde from L-glutamate: step 2/2. Functionally, catalyzes the NADPH-dependent reduction of L-glutamate 5-phosphate into L-glutamate 5-semialdehyde and phosphate. The product spontaneously undergoes cyclization to form 1-pyrroline-5-carboxylate. This is Gamma-glutamyl phosphate reductase from Erythrobacter litoralis (strain HTCC2594).